The following is a 659-amino-acid chain: tRNA uridine 5-carboxymethylaminomethyl modification enzyme MnmG (659 aa).

Position 13–18 (13–18 (GGGHAG)) interacts with FAD. An NAD(+)-binding site is contributed by 281–295 (GPRYCPSVEDKINRF).

It belongs to the MnmG family. As to quaternary structure, homodimer. Heterotetramer of two MnmE and two MnmG subunits. It depends on FAD as a cofactor.

It is found in the cytoplasm. Its function is as follows. NAD-binding protein involved in the addition of a carboxymethylaminomethyl (cmnm) group at the wobble position (U34) of certain tRNAs, forming tRNA-cmnm(5)s(2)U34. The protein is tRNA uridine 5-carboxymethylaminomethyl modification enzyme MnmG of Delftia acidovorans (strain DSM 14801 / SPH-1).